The sequence spans 135 residues: ATP synthase epsilon chain (135 aa).

Belongs to the ATPase epsilon chain family. In terms of assembly, F-type ATPases have 2 components, CF(1) - the catalytic core - and CF(0) - the membrane proton channel. CF(1) has five subunits: alpha(3), beta(3), gamma(1), delta(1), epsilon(1). CF(0) has three main subunits: a, b and c.

Its subcellular location is the cell inner membrane. Produces ATP from ADP in the presence of a proton gradient across the membrane. The sequence is that of ATP synthase epsilon chain from Chelativorans sp. (strain BNC1).